A 234-amino-acid polypeptide reads, in one-letter code: DNA repair protein RecO (234 aa).

The protein belongs to the RecO family.

Involved in DNA repair and RecF pathway recombination. This Hamiltonella defensa subsp. Acyrthosiphon pisum (strain 5AT) protein is DNA repair protein RecO.